A 420-amino-acid chain; its full sequence is Proteasome-activating nucleotidase (420 aa).

The interval 1–25 (MRSHLVKPGSVYDGIEPGELGETTE) is disordered. Residues 22-79 (ETTESVQDRVRQLESRNSFLEEQCSQIESEKRYLENQKIKYEREIRKLQSELDRMKTS) adopt a coiled-coil conformation. ATP is bound by residues 203-208 (GTGKTL) and His342. The docks into pockets in the proteasome alpha-ring to cause gate opening stretch occupies residues 418 to 420 (MFV).

This sequence belongs to the AAA ATPase family. As to quaternary structure, homohexamer. The hexameric complex has a two-ring architecture resembling a top hat that caps the 20S proteasome core at one or both ends. Upon ATP-binding, the C-terminus of PAN interacts with the alpha-rings of the proteasome core by binding to the intersubunit pockets.

The protein localises to the cytoplasm. In terms of biological role, ATPase which is responsible for recognizing, binding, unfolding and translocation of substrate proteins into the archaeal 20S proteasome core particle. Is essential for opening the gate of the 20S proteasome via an interaction with its C-terminus, thereby allowing substrate entry and access to the site of proteolysis. Thus, the C-termini of the proteasomal ATPase function like a 'key in a lock' to induce gate opening and therefore regulate proteolysis. Unfolding activity requires energy from ATP hydrolysis, whereas ATP binding alone promotes ATPase-20S proteasome association which triggers gate opening, and supports translocation of unfolded substrates. The polypeptide is Proteasome-activating nucleotidase (Methanosarcina mazei (strain ATCC BAA-159 / DSM 3647 / Goe1 / Go1 / JCM 11833 / OCM 88) (Methanosarcina frisia)).